The following is a 201-amino-acid chain: Holliday junction branch migration complex subunit RuvA (201 aa).

The segment at 1–64 (MFNSISGILS…EDQMRLFGFP (64 aa)) is domain I. A domain II region spans residues 65–140 (NQAERSLFLD…KLTNLNEVSS (76 aa)). Residues 140 to 144 (SKGQA) form a flexible linker region. Residues 145 to 201 (SVSCEYEDIVTALTEMGFERKSVIVQVEKIAEEMKAAGSDPLKNEEELFRRSIVALS) are domain III.

This sequence belongs to the RuvA family. As to quaternary structure, homotetramer. Forms an RuvA(8)-RuvB(12)-Holliday junction (HJ) complex. HJ DNA is sandwiched between 2 RuvA tetramers; dsDNA enters through RuvA and exits via RuvB. An RuvB hexamer assembles on each DNA strand where it exits the tetramer. Each RuvB hexamer is contacted by two RuvA subunits (via domain III) on 2 adjacent RuvB subunits; this complex drives branch migration. In the full resolvosome a probable DNA-RuvA(4)-RuvB(12)-RuvC(2) complex forms which resolves the HJ.

It is found in the cytoplasm. Its function is as follows. The RuvA-RuvB-RuvC complex processes Holliday junction (HJ) DNA during genetic recombination and DNA repair, while the RuvA-RuvB complex plays an important role in the rescue of blocked DNA replication forks via replication fork reversal (RFR). RuvA specifically binds to HJ cruciform DNA, conferring on it an open structure. The RuvB hexamer acts as an ATP-dependent pump, pulling dsDNA into and through the RuvAB complex. HJ branch migration allows RuvC to scan DNA until it finds its consensus sequence, where it cleaves and resolves the cruciform DNA. The sequence is that of Holliday junction branch migration complex subunit RuvA from Treponema denticola (strain ATCC 35405 / DSM 14222 / CIP 103919 / JCM 8153 / KCTC 15104).